Reading from the N-terminus, the 452-residue chain is Type II methyltransferase M.EcaI (452 aa).

The protein belongs to the N(4)/N(6)-methyltransferase family.

It carries out the reaction a 2'-deoxyadenosine in DNA + S-adenosyl-L-methionine = an N(6)-methyl-2'-deoxyadenosine in DNA + S-adenosyl-L-homocysteine + H(+). Functionally, a beta subtype methylase, recognizes the double-stranded sequence 5'-GGTNACC-3', methylates A-5 on both strands and protects the DNA from cleavage by the EcaI endonuclease. The protein is Type II methyltransferase M.EcaI (ecaIM) of Enterobacter cloacae.